We begin with the raw amino-acid sequence, 128 residues long: Disintegrin EO4A (128 aa).

Residues 1-20 (MIPVLLVTICLAVFPFQGSS) form the signal peptide. The propeptide occupies 21–47 (IILESGNINDYEIVYPKKVNVLPTGAM). The Disintegrin domain maps to 26-112 (GNINDYEIVY…DCPRNPYKGK (87 aa)). Disulfide bonds link Cys53–Cys76, Cys67–Cys73, Cys72–Cys97, and Cys85–Cys104. The short motif at 89 to 91 (RGD) is the Cell attachment site element. A propeptide spanning residues 115 to 128 (PMKWPAAAKGSVLM) is cleaved from the precursor.

The protein belongs to the disintegrin family. Dimeric disintegrin subfamily. As to quaternary structure, heterodimer with EO5B; disulfide-linked. In terms of tissue distribution, expressed by the venom gland.

It is found in the secreted. Functionally, poor inhibitor of platelet aggregation. The disintegrin inhibits the adhesion of cells expressing the RGD-dependent integrin alpha-5/beta-1 (ITGA5/ITGB1) to immobilized fibronectin. Inhibition on alpha-2b/beta-3 (ITGA2B/ITGB3) is low. The sequence is that of Disintegrin EO4A from Echis ocellatus (Ocellated saw-scaled viper).